A 256-amino-acid chain; its full sequence is MKNTLLKLGVCVSLLGITPFVSTISSVQAERTVEHKVIKNETGTISISQLNKNVWVHTELGYFSGEAVPSNGLVLNTSKGLVLVDSSWDDKLTKELIEMVEKKFKKRVTDVIITHAHADRIGGMKTLKERGIKAHSTALTAELAKKNGYEEPLGDLQSVTNLKFGNMKVETFYPGKGHTEDNIVVWLPQYQILAGGCLVKSASSKDLGNVADAYVNEWSTSIENVLKRYGNINLVVPGHGEVGDRGLLLHTLDLLK.

The N-terminal stretch at M1–A29 is a signal peptide. Residues H115, H117, D119, H178, and C197 each contribute to the Zn(2+) site. K200 and N209 together coordinate substrate. H239 serves as a coordination point for Zn(2+).

This sequence belongs to the metallo-beta-lactamase superfamily. Class-B beta-lactamase family. Monomer. Requires Zn(2+) as cofactor.

Its subcellular location is the periplasm. It carries out the reaction a beta-lactam + H2O = a substituted beta-amino acid. With respect to regulation, inhibited by chelating agents such as EDTA. In terms of biological role, confers resistance to the different beta-lactams antibiotics (penicillin, cephalosporin and carbapenem) via the hydrolysis of the beta-lactam ring. Benzylpenicillin is a better substrate than cephalosporin C and ampicillin. The chain is Metallo-beta-lactamase type 2 from Bacillus cereus.